Consider the following 372-residue polypeptide: Septin-1 (372 aa).

The Septin-type G domain occupies 27 to 301 (KGFDFTLMVA…EGYRARCLQS (275 aa)). The interval 37–44 (GESGLGKS) is G1 motif. Residues 37–44 (GESGLGKS), T71, G97, and 176–184 (KADALMPQE) contribute to the GTP site. The interval 94–97 (DTPG) is G3 motif. Residues 175 to 178 (GKAD) are G4 motif. At S211 the chain carries Phosphoserine. GTP is bound by residues G234 and R250. S253 is subject to Phosphoserine; by AURKB. T256 carries the phosphothreonine modification. 2 positions are modified to phosphoserine; by AURKB: S312 and S320. The disordered stretch occupies residues 352-372 (LEKMQAQMQQSQAQGEQSDAL). The segment covering 355–372 (MQAQMQQSQAQGEQSDAL) has biased composition (low complexity).

This sequence belongs to the TRAFAC class TrmE-Era-EngA-EngB-Septin-like GTPase superfamily. Septin GTPase family. In terms of assembly, septins polymerize into heterooligomeric protein complexes that form filaments, and can associate with cellular membranes, actin filaments and microtubules. GTPase activity is required for filament formation. Interacts with AURKB. Expressed at high levels in lymphoid and hematopoietic tissues.

The protein localises to the cytoplasm. It localises to the cytoskeleton. It is found in the microtubule organizing center. The protein resides in the centrosome. Its subcellular location is the midbody. Functionally, filament-forming cytoskeletal GTPase. May play a role in cytokinesis (Potential). The protein is Septin-1 of Homo sapiens (Human).